The primary structure comprises 519 residues: 2,3-bisphosphoglycerate-independent phosphoglycerate mutase (519 aa).

Mn(2+) is bound by residues Asp-18 and Ser-68. The Phosphoserine intermediate role is filled by Ser-68. Substrate contacts are provided by residues His-129, 159–160, Arg-191, Arg-197, 267–270, and Lys-341; these read RD and RADR. Positions 408, 412, 449, 450, and 468 each coordinate Mn(2+).

Belongs to the BPG-independent phosphoglycerate mutase family. In terms of assembly, monomer. The cofactor is Mn(2+).

The catalysed reaction is (2R)-2-phosphoglycerate = (2R)-3-phosphoglycerate. Its pathway is carbohydrate degradation; glycolysis; pyruvate from D-glyceraldehyde 3-phosphate: step 3/5. Functionally, catalyzes the interconversion of 2-phosphoglycerate and 3-phosphoglycerate. The protein is 2,3-bisphosphoglycerate-independent phosphoglycerate mutase of Coxiella burnetii (strain Dugway 5J108-111).